A 131-amino-acid chain; its full sequence is Peptide methionine sulfoxide reductase MsrB (131 aa).

A MsrB domain is found at 9-131 (DEDWKKELTP…NSASLKFQKE (123 aa)). Zn(2+)-binding residues include cysteine 48, cysteine 51, cysteine 97, and cysteine 100. Cysteine 120 serves as the catalytic Nucleophile.

The protein belongs to the MsrB Met sulfoxide reductase family. Requires Zn(2+) as cofactor.

The catalysed reaction is L-methionyl-[protein] + [thioredoxin]-disulfide + H2O = L-methionyl-(R)-S-oxide-[protein] + [thioredoxin]-dithiol. The protein is Peptide methionine sulfoxide reductase MsrB of Leptospira interrogans serogroup Icterohaemorrhagiae serovar Lai (strain 56601).